The primary structure comprises 269 residues: Formamidopyrimidine-DNA glycosylase (269 aa).

Pro-2 functions as the Schiff-base intermediate with DNA in the catalytic mechanism. Glu-3 serves as the catalytic Proton donor. Lys-57 functions as the Proton donor; for beta-elimination activity in the catalytic mechanism. The DNA site is built by His-90, Arg-109, and Lys-150. The FPG-type zinc finger occupies 235-269; sequence QVYGRKGEPCRVCGTPIVATKHAQRATFYCRHCQK. The active-site Proton donor; for delta-elimination activity is Arg-259.

It belongs to the FPG family. Monomer. The cofactor is Zn(2+).

The enzyme catalyses Hydrolysis of DNA containing ring-opened 7-methylguanine residues, releasing 2,6-diamino-4-hydroxy-5-(N-methyl)formamidopyrimidine.. It carries out the reaction 2'-deoxyribonucleotide-(2'-deoxyribose 5'-phosphate)-2'-deoxyribonucleotide-DNA = a 3'-end 2'-deoxyribonucleotide-(2,3-dehydro-2,3-deoxyribose 5'-phosphate)-DNA + a 5'-end 5'-phospho-2'-deoxyribonucleoside-DNA + H(+). In terms of biological role, involved in base excision repair of DNA damaged by oxidation or by mutagenic agents. Acts as a DNA glycosylase that recognizes and removes damaged bases. Has a preference for oxidized purines, such as 7,8-dihydro-8-oxoguanine (8-oxoG). Has AP (apurinic/apyrimidinic) lyase activity and introduces nicks in the DNA strand. Cleaves the DNA backbone by beta-delta elimination to generate a single-strand break at the site of the removed base with both 3'- and 5'-phosphates. This is Formamidopyrimidine-DNA glycosylase from Salmonella enteritidis PT4 (strain P125109).